Reading from the N-terminus, the 106-residue chain is uncharacterized protein (106 aa).

It belongs to the HesB/IscA family.

This is an uncharacterized protein from Rhodobacter capsulatus (Rhodopseudomonas capsulata).